The chain runs to 97 residues: Putative membrane protein insertion efficiency factor (97 aa).

The tract at residues 72–97 is disordered; the sequence is VPGAEPDQEQHQCTPLCNHHSEDHSQ.

It belongs to the UPF0161 family.

It localises to the cell inner membrane. Functionally, could be involved in insertion of integral membrane proteins into the membrane. The sequence is that of Putative membrane protein insertion efficiency factor from Alcanivorax borkumensis (strain ATCC 700651 / DSM 11573 / NCIMB 13689 / SK2).